The following is a 65-amino-acid chain: Small ribosomal subunit protein bS21A (65 aa).

The protein belongs to the bacterial ribosomal protein bS21 family.

The protein is Small ribosomal subunit protein bS21A of Francisella tularensis subsp. tularensis (strain FSC 198).